Here is a 158-residue protein sequence, read N- to C-terminus: Endoribonuclease YbeY (158 aa).

Residues histidine 119, histidine 123, and histidine 129 each contribute to the Zn(2+) site.

The protein belongs to the endoribonuclease YbeY family. Zn(2+) serves as cofactor.

The protein localises to the cytoplasm. Single strand-specific metallo-endoribonuclease involved in late-stage 70S ribosome quality control and in maturation of the 3' terminus of the 16S rRNA. This is Endoribonuclease YbeY from Acinetobacter baumannii (strain ACICU).